A 539-amino-acid polypeptide reads, in one-letter code: uncharacterized protein (539 aa).

Disordered regions lie at residues 179–203 (SDEL…HSHG) and 433–459 (AQAS…HRDE). Positions 182–192 (LLPDTGEDSDE) are enriched in acidic residues. Over residues 433–442 (AQASARAQAR) the composition is skewed to low complexity. Residues 443 to 455 (AARRGRSAAKARG) are compositionally biased toward basic residues.

It belongs to the mycobacterial PPE family.

Its subcellular location is the secreted. This is an uncharacterized protein from Mycobacterium tuberculosis (strain CDC 1551 / Oshkosh).